Reading from the N-terminus, the 627-residue chain is 2-oxoacid:ferredoxin oxidoreductase 1, subunit alpha (627 aa).

The YPITP motif signature appears at 253-257 (YPITP). Substrate-binding residues include Thr-256 and Arg-344.

As to quaternary structure, heterodimer composed of an alpha and a beta subunit.

It catalyses the reaction a 2-oxocarboxylate + 2 oxidized [2Fe-2S]-[ferredoxin] + CoA = an acyl-CoA + 2 reduced [2Fe-2S]-[ferredoxin] + CO2 + H(+). Its activity is regulated as follows. Inhibited by low concentration of 4-fluoro-7-nitrobenzofurazan (NBD-F). Functionally, catalyzes the coenzyme A-dependent oxidative decarboxylation of different 2-oxoacids such as 2-oxoglutarate, pyruvate and 2-oxobutyrate to form their CoA derivatives. The sequence is that of 2-oxoacid:ferredoxin oxidoreductase 1, subunit alpha from Sulfurisphaera tokodaii (strain DSM 16993 / JCM 10545 / NBRC 100140 / 7) (Sulfolobus tokodaii).